A 483-amino-acid chain; its full sequence is Cytochrome P450 71A23 (483 aa).

Residues 1–21 (MILFLCLIILFIITILFFKKH) form a helical membrane-spanning segment. Cys429 lines the heme pocket.

This sequence belongs to the cytochrome P450 family. The cofactor is heme.

Its subcellular location is the membrane. The chain is Cytochrome P450 71A23 (CYP71A23) from Arabidopsis thaliana (Mouse-ear cress).